The chain runs to 417 residues: Ribonuclease T2-like (417 aa).

The N-terminal stretch at 1 to 22 is a signal peptide; that stretch reads MSSISGFLGAIPGAQQILQTMA. 5 disulfides stabilise this stretch: Cys45-Cys63, Cys52-Cys99, Cys62-Cys165, Cys107-Cys157, and Cys229-Cys264. His92 is an active-site residue. A glycan (N-linked (GlcNAc...) asparagine) is linked at Asn115. Catalysis depends on residues Glu150 and His154. The interval 274 to 296 is disordered; it reads KTPNKDPGHGHEPTKTRHPHGPT. Over residues 276–288 the composition is skewed to basic and acidic residues; sequence PNKDPGHGHEPTK. A glycan (N-linked (GlcNAc...) asparagine) is linked at Asn383.

Belongs to the RNase T2 family.

Its subcellular location is the vacuole lumen. The protein resides in the cytoplasm. The enzyme catalyses a ribonucleotidyl-ribonucleotide-RNA + H2O = a 3'-end 3'-phospho-ribonucleotide-RNA + a 5'-end dephospho-ribonucleoside-RNA + H(+). In terms of biological role, rnase which modulates cell survival under stress conditions. Released from the vacuole to the cytoplasm during stress to promote tRNA and rRNA cleavage and to activate separately a downstream pathway that promotes cell death. Involved in cell size, vacuolar morphology and growth at high temperatures and high salt concentration. The sequence is that of Ribonuclease T2-like (rny1) from Emericella nidulans (strain FGSC A4 / ATCC 38163 / CBS 112.46 / NRRL 194 / M139) (Aspergillus nidulans).